The sequence spans 349 residues: Homeobox-leucine zipper protein HOX5 (349 aa).

Residues alanine 83–glutamine 142 constitute a DNA-binding region (homeobox). Residues lysine 141–lysine 185 form a leucine-zipper region. Positions lysine 181–alanine 253 are disordered. A compositionally biased stretch (low complexity) spans serine 188–alanine 198.

Belongs to the HD-ZIP homeobox family. Class I subfamily. As to quaternary structure, homodimer. May form a heterodimer with HOX4. As to expression, expressed in seedlings, roots, leaves, nodes, internodes, flowers and embryo.

It localises to the nucleus. Probable transcription activator that binds to the DNA sequence 5'-CAAT[AT]ATTG-3'. This chain is Homeobox-leucine zipper protein HOX5 (HOX5), found in Oryza sativa subsp. japonica (Rice).